The primary structure comprises 234 residues: Thiamine import ATP-binding protein ThiQ (234 aa).

Positions 2–230 (LRFSDVKYRY…EKPPELTQYL (229 aa)) constitute an ABC transporter domain. An ATP-binding site is contributed by 32–39 (GPSGAGKS).

It belongs to the ABC transporter superfamily. Thiamine importer (TC 3.A.1.19.1) family. As to quaternary structure, the complex is composed of two ATP-binding proteins (ThiQ), two transmembrane proteins (ThiP) and a solute-binding protein (ThiB).

The protein resides in the cell inner membrane. It catalyses the reaction thiamine(out) + ATP + H2O = thiamine(in) + ADP + phosphate + H(+). Its function is as follows. Part of the ABC transporter complex ThiBPQ involved in thiamine import. Responsible for energy coupling to the transport system. The chain is Thiamine import ATP-binding protein ThiQ from Aliivibrio fischeri (strain ATCC 700601 / ES114) (Vibrio fischeri).